The following is a 154-amino-acid chain: Cyanate hydratase (154 aa).

Active-site residues include arginine 100, glutamate 103, and serine 126.

Belongs to the cyanase family.

It carries out the reaction cyanate + hydrogencarbonate + 3 H(+) = NH4(+) + 2 CO2. Functionally, catalyzes the reaction of cyanate with bicarbonate to produce ammonia and carbon dioxide. The sequence is that of Cyanate hydratase from Aspergillus fumigatus (strain CBS 144.89 / FGSC A1163 / CEA10) (Neosartorya fumigata).